We begin with the raw amino-acid sequence, 310 residues long: Ribosomal RNA small subunit methyltransferase H (310 aa).

S-adenosyl-L-methionine is bound by residues 32–34 (AGH), Asp52, Phe79, Asp100, and Gln107.

Belongs to the methyltransferase superfamily. RsmH family.

The protein resides in the cytoplasm. It carries out the reaction cytidine(1402) in 16S rRNA + S-adenosyl-L-methionine = N(4)-methylcytidine(1402) in 16S rRNA + S-adenosyl-L-homocysteine + H(+). Its function is as follows. Specifically methylates the N4 position of cytidine in position 1402 (C1402) of 16S rRNA. The chain is Ribosomal RNA small subunit methyltransferase H from Halalkalibacterium halodurans (strain ATCC BAA-125 / DSM 18197 / FERM 7344 / JCM 9153 / C-125) (Bacillus halodurans).